The chain runs to 296 residues: MATVQPIVNSHLSELDEDVFHHFGFTTKSFDFKEKFGDVKFVCVCGSSGRIHNFAISMAKLAGLALPVENIAGSHARFVLYKVDHILFADHGMGIPSALIMLHEVTKLLHYAGCKDVLFIRLGTSGGLGVKPGTIVLSDRCVNTKLEPYNELCILGKPVRRQTIVDLNTVNELKKLSENLSLECSVVVGGTIAANDFYEEQGRLDGSICTFSKEEKLAFLQSAYEHGIRNMEMEGTAITSHCYLTGHRAILVCVTAVNRLEGDQITISTDEFTLFAQRPGQLVGEYLKRNNGIIVR.

Residues Gly46, Arg77, and 121–124 (RLGT) contribute to the phosphate site. Residues 125–126 (SG) and 201–203 (QGR) each bind uridine.

This sequence belongs to the PNP/UDP phosphorylase family. Homodimer.

The catalysed reaction is uridine + phosphate = alpha-D-ribose 1-phosphate + uracil. Its pathway is pyrimidine metabolism; UMP biosynthesis via salvage pathway; uracil from uridine (phosphorylase route): step 1/1. Functionally, catalyzes the reversible phosphorylytic cleavage of uridine and deoxyuridine to uracil and ribose- or deoxyribose-1-phosphate. The produced molecules are then utilized as carbon and energy sources or in the rescue of pyrimidine bases for nucleotide synthesis. The polypeptide is Uridine phosphorylase A (Schistosoma mansoni (Blood fluke)).